The primary structure comprises 152 residues: Probable prefoldin subunit 5 (152 aa).

The protein belongs to the prefoldin subunit alpha family. As to quaternary structure, heterohexamer of two PFD-alpha type and four PFD-beta type subunits.

Binds specifically to cytosolic chaperonin (c-CPN) and transfers target proteins to it. Binds to nascent polypeptide chain and promotes folding in an environment in which there are many competing pathways for nonnative proteins. This is Probable prefoldin subunit 5 (pfd-5) from Caenorhabditis elegans.